The sequence spans 729 residues: Neurochondrin (729 aa).

At S2 the chain carries N-acetylserine. The residue at position 2 (S2) is a Phosphoserine. S-palmitoyl cysteine attachment occurs at residues C3 and C4. An Asymmetric dimethylarginine modification is found at R75. S448 is modified (phosphoserine).

The protein belongs to the neurochondrin family. In terms of assembly, interacts with MCHR1. Interacts with SEMA4C. Interacts with DIAPH1 (via FH3 domain). Interacts with GRM5. Palmitoylated. Palmitoylation by ZDHHC1, ZDHHC3 and ZDHHC11 regulates the association of NCDN with endosome membranes. May also be palmitoylated by ZDHHC7. In terms of tissue distribution, expressed in the neuronal, chondral and bone tissues. Expressed in dendrites. Enriched in the brain in the surface layer I-IV. In brains, protein level increases in male but decreases in female with advancing age (at protein level). In adult brains, it is highly expressed in the forebrain and hindbrain. Highly expressed in the hippocampus, piriform cortex, septum, amygdaloid complex, medial geniculate nucleus, inferior colliculus, cerebellar nuclei and the nuclei of the Vth, VIIth, and XIIth cranial nerves. In bone tissues, it is expressed in osteoblasts and osteocytes.

The protein resides in the cytoplasm. It is found in the cytosol. Its subcellular location is the endosome membrane. It localises to the cell projection. The protein localises to the dendrite. The protein resides in the postsynapse. Its function is as follows. Probably involved in signal transduction, in the nervous system, via increasing cell surface localization of GRM5 and positively regulating its signaling. Required for the spatial learning process. Acts as a negative regulator of Ca(2+)-calmodulin-dependent protein kinase 2 (CaMK2) phosphorylation. May play a role in modulating melanin-concentrating hormone-mediated functions via its interaction with MCHR1 that interferes with G protein-coupled signal transduction. May be involved in bone metabolism. May also be involved in neurite outgrowth. The protein is Neurochondrin (Ncdn) of Mus musculus (Mouse).